Reading from the N-terminus, the 303-residue chain is 1-phosphofructokinase (303 aa).

248–249 contacts ATP; the sequence is GD. Aspartate 249 serves as the catalytic Proton acceptor.

Belongs to the carbohydrate kinase PfkB family.

The catalysed reaction is beta-D-fructose 1-phosphate + ATP = beta-D-fructose 1,6-bisphosphate + ADP + H(+). In terms of biological role, catalyzes the ATP-dependent phosphorylation of fructose-l-phosphate to fructose-l,6-bisphosphate. This chain is 1-phosphofructokinase (fruK), found in Bacillus subtilis (strain 168).